Consider the following 1143-residue polypeptide: MDATLDRFFPLFESESNEDFWRIEEIRRYHESLMVELDRIYRIAEAARKKGLDPELSVEIPIAKNMAERVEKLMNLQGLAKRIMELEEGGLSRELICFKVADEIVEGKFGEMPKEEAIDKAVRTAVAIMTEGVVAAPIEGIARVRIDRENFLRVYYAGPIRSAGGTAQVISVLVADYVRRKAEIGRYVPTEEEILRYCEEIPLYKKVANLQYLPSDEEIRLIVSNCPICIDGEPTESAEVSGYRNLPRVETNRVRGGMALVIAEGIALKAPKLKKMVDEVGIEGWEWLDALIKGGGDSGSEEEKAVIKPKDKYLSDIVAGRPVLSHPSRKGGFRLRYGRARNSGFATVGVNPATMYLLEFVAVGTQLKVERPGKAGGVVPVSTIEGPTVRLKNGDVVKINTLSEAKALKGEVAAILDLGEILINYGDFLENNHPLIPASYTYEWWIQEAEKAGLRGDYRKISEEEALKLCDEFHVPLHPDYTYLWHDISVEDYRYLRNFVSDNGKIEGKHGKSVLLLPYDSRVKEILEALLLEHKVRESFIVIETWRAFIRCLGLDEKLSKVSEVSGKDVLEIVNGISGIKVRPKALSRIGARMGRPEKAKERKMSPPPHILFPVGMAGGNTRDIKNAINYTKSYNAKKGEIEVEIAIRKCPQCGKETFWLKCDVCGELTEQLYYCPSCRMKNTSSVCESCGRECEGYMKRKVDLRELYEEAIANLGEYDSFDTIKGVKGMTSKTKIPERLEKGILRVKHGVFVFKDGTARFDATDLPITHFKPAEIGVSVEKLRELGYERDYKGAELKNENQIVELKPQDVILPKSGAEYLLRVANFIDDLLVKFYKMEPFYNAKSVEDLIGHLVIGLAPHTSAGVLGRIIGFSDVLAGYAHPYFHAAKRRNCDGDEDCFMLLLDGLLNFSRKFLPDKRGGQMDAPLVLTAIVDPREVDKEVHNMDIVERYPLEFYEATMRFASPKEMEDYVEKVKDRLKDESRFCGLFFTHDTENIAAGVKESAYKSLKTMQDKVYRQMELARMIVAVDEHDVAERVINVHFLPDIIGNLRAFSRQEFRCTRCNTKYRRIPLVGKCLKCGNKLTLTVHSSSIMKYLELSKFLCENFNVSSYTKQRLMLLEQEIKSMFENGTEKQVSISDFV.

Belongs to the archaeal DNA polymerase II family. As to quaternary structure, heterodimer of a large subunit and a small subunit.

The enzyme catalyses DNA(n) + a 2'-deoxyribonucleoside 5'-triphosphate = DNA(n+1) + diphosphate. The catalysed reaction is Exonucleolytic cleavage in the 3'- to 5'-direction to yield nucleoside 5'-phosphates.. In terms of biological role, possesses two activities: a DNA synthesis (polymerase) and an exonucleolytic activity that degrades single-stranded DNA in the 3'- to 5'-direction. Has a template-primer preference which is characteristic of a replicative DNA polymerase. This Archaeoglobus fulgidus (strain ATCC 49558 / DSM 4304 / JCM 9628 / NBRC 100126 / VC-16) protein is DNA polymerase II large subunit (polC).